The sequence spans 186 residues: Ribosome-recycling factor (186 aa).

The protein belongs to the RRF family.

The protein localises to the cytoplasm. In terms of biological role, responsible for the release of ribosomes from messenger RNA at the termination of protein biosynthesis. May increase the efficiency of translation by recycling ribosomes from one round of translation to another. This is Ribosome-recycling factor from Chlorobaculum tepidum (strain ATCC 49652 / DSM 12025 / NBRC 103806 / TLS) (Chlorobium tepidum).